A 74-amino-acid polypeptide reads, in one-letter code: Exodeoxyribonuclease 7 small subunit (74 aa).

This sequence belongs to the XseB family. As to quaternary structure, heterooligomer composed of large and small subunits.

It localises to the cytoplasm. The enzyme catalyses Exonucleolytic cleavage in either 5'- to 3'- or 3'- to 5'-direction to yield nucleoside 5'-phosphates.. Functionally, bidirectionally degrades single-stranded DNA into large acid-insoluble oligonucleotides, which are then degraded further into small acid-soluble oligonucleotides. The protein is Exodeoxyribonuclease 7 small subunit of Symbiobacterium thermophilum (strain DSM 24528 / JCM 14929 / IAM 14863 / T).